Here is a 353-residue protein sequence, read N- to C-terminus: (3aS,4S,5R,7aS)-5-hydroxy-7a-methyl-1-oxo-octahydro-1H-indene-4-carboxyl-CoA dehydrogenase (353 aa).

FMN-binding positions include 22–24, 171–173, and 194–195; these read GMG, AGG, and GT.

It belongs to the nitronate monooxygenase family.

It carries out the reaction (3aS,4S,5R,7aS)-5-hydroxy-7a-methyl-1-oxo-octahydro-1H-indene-4-carboxyl-CoA + NAD(+) = (5R,7aS)-5-hydroxy-7a-methyl-1-oxo-2,3,5,6,7,7a-hexahydro-1H-indene-carboxyl-CoA + NADH + H(+). It functions in the pathway steroid metabolism; cholesterol degradation. Involved in the final steps of cholesterol and steroid degradation. Probably catalyzes the introduction of a double bound into the C ring of 5OH-HIC-CoA, leading to the formation of (5R,7aS)-5-hydroxy-7a-methyl-1-oxo-3,5,6,7-tetrahydro-2H-indene-4-carboxyl-CoA. The polypeptide is (3aS,4S,5R,7aS)-5-hydroxy-7a-methyl-1-oxo-octahydro-1H-indene-4-carboxyl-CoA dehydrogenase (Rhodococcus jostii (strain RHA1)).